A 207-amino-acid chain; its full sequence is Ribonuclease HII (207 aa).

The 190-residue stretch at 18–207 (GLVAGVDEAG…VAEVLREALP (190 aa)) folds into the RNase H type-2 domain. D24, E25, and D116 together coordinate a divalent metal cation.

This sequence belongs to the RNase HII family. The cofactor is Mn(2+). It depends on Mg(2+) as a cofactor.

It localises to the cytoplasm. The catalysed reaction is Endonucleolytic cleavage to 5'-phosphomonoester.. In terms of biological role, endonuclease that specifically degrades the RNA of RNA-DNA hybrids. This is Ribonuclease HII from Albidiferax ferrireducens (strain ATCC BAA-621 / DSM 15236 / T118) (Rhodoferax ferrireducens).